Reading from the N-terminus, the 481-residue chain is uncharacterized protein (481 aa).

Residues 1–18 show a composition bias toward basic residues; the sequence is MSRLPSKTKYHSSHRSLN. The disordered stretch occupies residues 1–37; that stretch reads MSRLPSKTKYHSSHRSLNRKTPLLQRSSETNSLRESG. Residues 24–34 are compositionally biased toward polar residues; sequence LQRSSETNSLR. 2 helical membrane-spanning segments follow: residues 172 to 191 and 195 to 214; these read SISTLIGTGGGIGITGAGAI and AAAGIGTAVTVGVLLFYLCW.

The protein resides in the membrane. This is an uncharacterized protein from Coxiella burnetii (strain RSA 493 / Nine Mile phase I).